The primary structure comprises 208 residues: Hypoxanthine-guanine phosphoribosyltransferase (208 aa).

GMP contacts are provided by residues Lys63, 122 to 130 (EDIVDSAIT), Lys154, and Asp182. Asp126 functions as the Proton acceptor in the catalytic mechanism. A Mg(2+)-binding site is contributed by Asp182.

It belongs to the purine/pyrimidine phosphoribosyltransferase family. Requires Mg(2+) as cofactor.

It is found in the cytoplasm. It catalyses the reaction IMP + diphosphate = hypoxanthine + 5-phospho-alpha-D-ribose 1-diphosphate. The enzyme catalyses GMP + diphosphate = guanine + 5-phospho-alpha-D-ribose 1-diphosphate. It functions in the pathway purine metabolism; IMP biosynthesis via salvage pathway; IMP from hypoxanthine: step 1/1. In terms of biological role, converts guanine to guanosine monophosphate, and hypoxanthine to inosine monophosphate. Transfers the 5-phosphoribosyl group from 5-phosphoribosylpyrophosphate onto the purine. Plays a central role in the generation of purine nucleotides through the purine salvage pathway. The sequence is that of Hypoxanthine-guanine phosphoribosyltransferase (HGPRT) from Crithidia fasciculata.